A 399-amino-acid polypeptide reads, in one-letter code: Bombesin receptor subtype-3 (399 aa).

The Extracellular segment spans residues 1–41 (MSQRQPQSPNQTLISITNDTETSSSAVSNDTTPKGWTGDNS). Residues Asn-10, Asn-18, and Asn-29 are each glycosylated (N-linked (GlcNAc...) asparagine). The helical transmembrane segment at 42–63 (PGIEALCAIYITYAVIISVGIL) threads the bilayer. Residues 64–82 (GNAILIKVFFKTKSMQTVP) lie on the Cytoplasmic side of the membrane. A helical transmembrane segment spans residues 83–103 (NIFITSLAFGDLLLLLTCVPV). Topologically, residues 104–121 (DATHYLAEGWLFGKVGCK) are extracellular. Cys-120 and Cys-203 are disulfide-bonded. Residues 122-143 (VLSFIRLTSVGVSVFTLTILSA) form a helical membrane-spanning segment. Residues 144-163 (DRYKAVVKPLERQPSNAILK) are Cytoplasmic-facing. Residues 164 to 184 (TCAKAGGIWIMAMIFALPEAI) form a helical membrane-spanning segment. Residues 185 to 220 (FSNVYTFQDPNRNVTFESCNSYPISERLLQEIHSLL) lie on the Extracellular side of the membrane. The helical transmembrane segment at 221-241 (CFLVFYIIPLSIISVYYSLIA) threads the bilayer. Residues 242 to 272 (RTLYKSTLNIPTEEQSHARKQIESRKRIAKT) lie on the Cytoplasmic side of the membrane. Residues 273–293 (VLVLVALFALCWLPNHLLYLY) traverse the membrane as a helical segment. Over 294–313 (HSFTYESYAEPSDVPFVVTI) the chain is Extracellular. Residues 314–333 (FSRVLAFSNSCVNPFALYWL) form a helical membrane-spanning segment. At 334–399 (SKTFQKHFKA…STAKKGEDKV (66 aa)) the chain is on the cytoplasmic side. Cys-347 is lipidated: S-palmitoyl cysteine.

It belongs to the G-protein coupled receptor 1 family. As to quaternary structure, interacts with C6orf89.

It is found in the cell membrane. In terms of biological role, role in sperm cell division, maturation, or function. This receptor mediates its action by association with G proteins that activate a phosphatidylinositol-calcium second messenger system. This is Bombesin receptor subtype-3 (Brs3) from Rattus norvegicus (Rat).